Here is a 962-residue protein sequence, read N- to C-terminus: Vacuolar membrane protease (962 aa).

At 1–14 (MLAQFLRSLFRFRK) the chain is on the cytoplasmic side. Residues 15–35 (TTVSVLLVATYVVVFLLNVWD) traverse the membrane as a helical segment. Residues 36 to 359 (RIRYQYSLPE…FVTASTKDLF (324 aa)) lie on the Vacuolar side of the membrane. N-linked (GlcNAc...) asparagine glycosylation is present at Asn-118. Zn(2+) contacts are provided by His-153 and Asp-165. Glu-197 (proton acceptor) is an active-site residue. The Zn(2+) site is built by Glu-198, Glu-223, and His-297. A helical transmembrane segment spans residues 360-380 (TLNCVVLSVIPVIILVLEFVI). Residues 381-390 (QRRKTRERNP) lie on the Cytoplasmic side of the membrane. The chain crosses the membrane as a helical span at residues 391–411 (LLVWLRLPFSMFISYLVTATF). The Vacuolar portion of the chain corresponds to 412–431 (RSSLFRVNPLIFSRDYVSPT). The chain crosses the membrane as a helical span at residues 432–452 (IGFSFTFLILNYLVLSLLEYL). The Cytoplasmic segment spans residues 453–460 (APSRDLKT). Residues 461–481 (VSFVELFFGMWIALLWATIRL) traverse the membrane as a helical segment. Topologically, residues 482–489 (CTSKYTAT) are vacuolar. A helical transmembrane segment spans residues 490–510 (GVYPITVLYLLMSFGAIVGLV). Topologically, residues 511–601 (CSAFKRKHSV…VVSALNYDWS (91 aa)) are cytoplasmic. The segment covering 531–554 (APNTYSSIEESPQQATNTEAPNEN) has biased composition (polar residues). The tract at residues 531-563 (APNTYSSIEESPQQATNTEAPNENSPEEHDERA) is disordered. A helical transmembrane segment spans residues 602 to 622 (VQFLAVVPLASFFVIMCLSLI). Over 623 to 639 (LDGIYQTCQEGFQATWN) the chain is Vacuolar. Asn-639 is a glycosylation site (N-linked (GlcNAc...) asparagine). A helical membrane pass occupies residues 640-660 (VSKISMLGGMLLAIPVLPFCY). Residue Lys-661 is a topological domain, cytoplasmic. The chain crosses the membrane as a helical span at residues 662 to 682 (LNYFVSMVLLFAAASAGIFSF). Residues 683-962 (ERAPFTESSP…LVIVNDYIEL (280 aa)) lie on the Vacuolar side of the membrane. 2 N-linked (GlcNAc...) asparagine glycosylation sites follow: Asn-812 and Asn-839.

This sequence belongs to the peptidase M28 family. Zn(2+) serves as cofactor.

It is found in the vacuole membrane. In terms of biological role, may be involved in vacuolar sorting and osmoregulation. This is Vacuolar membrane protease from Lachancea thermotolerans (strain ATCC 56472 / CBS 6340 / NRRL Y-8284) (Yeast).